Consider the following 623-residue polypeptide: Negative regulator of PDR1-mediated fluconazole resistance JJJ1 (623 aa).

A J domain is found at Cys-4–Lys-70. The C2H2-type zinc-finger motif lies at Tyr-363 to His-387. Disordered regions lie at residues Gln-448–Asn-476, Gly-499–Lys-581, and Ser-599–Lys-623. The span at Asp-453 to Asp-466 shows a compositional bias: acidic residues. Residues Gly-499–Ala-508 are compositionally biased toward polar residues. Positions Glu-525–Thr-538 are enriched in basic and acidic residues. 2 stretches are compositionally biased toward basic residues: residues Lys-553–Lys-564 and Lys-612–Lys-623.

The protein localises to the nucleus. Functionally, acts as a negative regulator of fluconazole resistance, primarily through down-regulation of the ABC transporter gene CDR1 via inactivation of the PDR1 transcriptional pathway. The polypeptide is Negative regulator of PDR1-mediated fluconazole resistance JJJ1 (Candida glabrata (strain ATCC 2001 / BCRC 20586 / JCM 3761 / NBRC 0622 / NRRL Y-65 / CBS 138) (Yeast)).